Here is a 334-residue protein sequence, read N- to C-terminus: Uroporphyrinogen decarboxylase (334 aa).

Substrate contacts are provided by residues 22-26, Asp71, Tyr140, Ser195, and His310; that span reads RQVGR.

It belongs to the uroporphyrinogen decarboxylase family. Homodimer.

It localises to the cytoplasm. It catalyses the reaction uroporphyrinogen III + 4 H(+) = coproporphyrinogen III + 4 CO2. It functions in the pathway porphyrin-containing compound metabolism; protoporphyrin-IX biosynthesis; coproporphyrinogen-III from 5-aminolevulinate: step 4/4. Functionally, catalyzes the decarboxylation of four acetate groups of uroporphyrinogen-III to yield coproporphyrinogen-III. The sequence is that of Uroporphyrinogen decarboxylase from Chlamydia muridarum (strain MoPn / Nigg).